The chain runs to 287 residues: Shikimate dehydrogenase (NADP(+)) (287 aa).

Residues 18 to 20 (SYS) and Thr-66 each bind shikimate. Lys-70 serves as the catalytic Proton acceptor. Glu-82 contributes to the NADP(+) binding site. Shikimate-binding residues include Asn-91 and Asp-106. NADP(+)-binding positions include 130-134 (GSGGA) and Met-228. Residue Tyr-230 participates in shikimate binding. Gly-251 is a binding site for NADP(+).

The protein belongs to the shikimate dehydrogenase family. In terms of assembly, homodimer.

It carries out the reaction shikimate + NADP(+) = 3-dehydroshikimate + NADPH + H(+). It participates in metabolic intermediate biosynthesis; chorismate biosynthesis; chorismate from D-erythrose 4-phosphate and phosphoenolpyruvate: step 4/7. Functionally, involved in the biosynthesis of the chorismate, which leads to the biosynthesis of aromatic amino acids. Catalyzes the reversible NADPH linked reduction of 3-dehydroshikimate (DHSA) to yield shikimate (SA). The chain is Shikimate dehydrogenase (NADP(+)) from Chlorobium chlorochromatii (strain CaD3).